Here is a 124-residue protein sequence, read N- to C-terminus: Large ribosomal subunit protein uL18 (124 aa).

This sequence belongs to the universal ribosomal protein uL18 family. Part of the 50S ribosomal subunit; part of the 5S rRNA/L5/L18/L25 subcomplex. Contacts the 5S and 23S rRNAs.

This is one of the proteins that bind and probably mediate the attachment of the 5S RNA into the large ribosomal subunit, where it forms part of the central protuberance. This chain is Large ribosomal subunit protein uL18, found in Frankia casuarinae (strain DSM 45818 / CECT 9043 / HFP020203 / CcI3).